A 1288-amino-acid polypeptide reads, in one-letter code: Outer capsid protein lambda-2 (1288 aa).

892-899 (GAAAAGKS) contacts ATP.

It belongs to the orthoreovirus lambda-2 protein family. In terms of assembly, interacts with protein mu-NS; in viral inclusions.

The protein localises to the virion. The catalysed reaction is a 5'-end diphospho-ribonucleoside in mRNA + GTP + H(+) = a 5'-end (5'-triphosphoguanosine)-ribonucleoside in mRNA + diphosphate. The enzyme catalyses a 5'-end (5'-triphosphoguanosine)-ribonucleoside in mRNA + S-adenosyl-L-methionine = a 5'-end (N(7)-methyl 5'-triphosphoguanosine)-ribonucleoside in mRNA + S-adenosyl-L-homocysteine. Functionally, outer capsid protein involved in mRNA capping. Catalyzes the last 3 enzymatic activities for formation of the 5' cap structure on the viral plus-strand transcripts, namely the RNA guanylyltransferase, RNA-7N- and RNA-2'O-methyltransferase activities. In Reovirus type 2 (strain D5/Jones) (T2J), this protein is Outer capsid protein lambda-2 (L2).